A 98-amino-acid polypeptide reads, in one-letter code: MYNMVSLFIVAVLLLTYANVEGSDVTGGFPVNSNNCIYPCYSTQDEIQCEEFCEKLNGRLGYCRRDACYCEHLPESVKQITNSKTFDCSNGPWDLSTV.

The N-terminal stretch at 1–22 (MYNMVSLFIVAVLLLTYANVEG) is a signal peptide. 4 disulfide bridges follow: C36-C88, C40-C63, C49-C68, and C53-C70.

It belongs to the long (4 C-C) scorpion toxin superfamily. Sodium channel inhibitor family. Expressed by the venom gland.

The protein localises to the secreted. Functionally, probable sodium channel toxin. This is Probable sodium channel toxin Ts27 from Tityus serrulatus (Brazilian scorpion).